The sequence spans 2230 residues: Golgin subfamily A member 4 (2230 aa).

Residues 1–64 are disordered; that stretch reads MFKKLKQKIS…SGDTQSFAQK (64 aa). Residue Ser10 is modified to Phosphoserine. The segment covering 12 to 41 has biased composition (low complexity); the sequence is EQQQLQQALAPAQASSNSSTPTRMRSRTSS. Phosphothreonine is present on Thr39. A phosphoserine mark is found at Ser41, Ser71, Ser78, and Ser89. Positions 87-107 are enriched in basic and acidic residues; the sequence is SSSKESLVRTSSRESLNRLDL. The segment at 87–127 is disordered; it reads SSSKESLVRTSSRESLNRLDLDSSTASFDPPSDMDSEAEDL. The interval 133–203 is interaction with MACF1; it reads SLNKEQLIQR…EELQMDQQAK (71 aa). A coiled-coil region spans residues 133–2185; sequence SLNKEQLIQR…EYLRKVLFEY (2053 aa). Ser266 is modified (phosphoserine). N-linked (GlcNAc...) asparagine glycosylation is found at Asn585 and Asn1612. The region spanning 2168–2215 is the GRIP domain; sequence LFGEPTEFEYLRKVLFEYMMGRETKTMAKVITTVLKFPDDQTQKILER. A Phosphothreonine modification is found at Thr2223.

In terms of assembly, homodimer. Interacts with RAB6A. Interacts with GTP-bound ARL1 and ARL3. Interacts with MACF1. Directly interacts with TBC1D23. Interacts with FAM91A1; this interaction may be mediated by TBC1D23.

The protein localises to the cytoplasm. The protein resides in the golgi apparatus membrane. It is found in the golgi apparatus. It localises to the trans-Golgi network membrane. Involved in vesicular trafficking at the Golgi apparatus level. May play a role in delivery of transport vesicles containing GPI-linked proteins from the trans-Golgi network through its interaction with MACF1. Involved in endosome-to-Golgi trafficking. The polypeptide is Golgin subfamily A member 4 (GOLGA4) (Homo sapiens (Human)).